Here is a 255-residue protein sequence, read N- to C-terminus: NAP1-related protein 2 (255 aa).

Positions 19–60 (IDAELVLSIEKLQEIQDDLEKINEKASDEVLEVEQKYNVIRK) form a coiled coil. The tract at residues 213–255 (NPLTYFNNDADEEDFDGDDDGDEEEKEGDSDEDDDEEDEVGEE) is disordered. Over residues 221 to 255 (DADEEDFDGDDDGDEEEKEGDSDEDDDEEDEVGEE) the composition is skewed to acidic residues.

Belongs to the nucleosome assembly protein (NAP) family. As to quaternary structure, can form homomeric and heteromeric protein complexes with NRP1. Binds histones H2A and H2B and associates with chromatin in vivo. Ubiquitous.

The protein localises to the cytoplasm. The protein resides in the nucleus. In terms of biological role, acts as a histone H2A/H2B chaperone in nucleosome assembly, playing a critical role for the correct expression of genes involved in root proliferation and patterning. Required with NRP1 for the maintenance of cell proliferation and differentiation in postembryonic root growth. Involved in both intramolecular and intermolecular somatic homologous recombination. This Arabidopsis thaliana (Mouse-ear cress) protein is NAP1-related protein 2 (NRP2).